The following is a 552-amino-acid chain: Oxygen-dependent choline dehydrogenase (552 aa).

7–36 (DYIIIGAGSAGNVLAARLTEDKDTTVLLLE) is a binding site for FAD. Catalysis depends on histidine 477, which acts as the Proton acceptor.

Belongs to the GMC oxidoreductase family. The cofactor is FAD.

The enzyme catalyses choline + A = betaine aldehyde + AH2. It carries out the reaction betaine aldehyde + NAD(+) + H2O = glycine betaine + NADH + 2 H(+). Its pathway is amine and polyamine biosynthesis; betaine biosynthesis via choline pathway; betaine aldehyde from choline (cytochrome c reductase route): step 1/1. In terms of biological role, involved in the biosynthesis of the osmoprotectant glycine betaine. Catalyzes the oxidation of choline to betaine aldehyde and betaine aldehyde to glycine betaine at the same rate. The protein is Oxygen-dependent choline dehydrogenase of Acinetobacter baumannii (strain AB307-0294).